We begin with the raw amino-acid sequence, 229 residues long: GTP cyclohydrolase 1 (229 aa).

A disordered region spans residues 1 to 26; the sequence is MDAKIKPIRGTNPAEGRPEFQPAELE. Residues Cys118, His121, and Cys189 each coordinate Zn(2+).

This sequence belongs to the GTP cyclohydrolase I family. Toroid-shaped homodecamer, composed of two pentamers of five dimers.

It carries out the reaction GTP + H2O = 7,8-dihydroneopterin 3'-triphosphate + formate + H(+). It functions in the pathway cofactor biosynthesis; 7,8-dihydroneopterin triphosphate biosynthesis; 7,8-dihydroneopterin triphosphate from GTP: step 1/1. This chain is GTP cyclohydrolase 1, found in Rhodopseudomonas palustris (strain ATCC BAA-98 / CGA009).